The sequence spans 368 residues: Probable dual-specificity RNA methyltransferase RlmN (368 aa).

Glutamate 100 serves as the catalytic Proton acceptor. Positions 106-344 (QHYGLSVCVT…CVVRQEHGTD (239 aa)) constitute a Radical SAM core domain. Residues cysteine 113 and cysteine 349 are joined by a disulfide bond. 3 residues coordinate [4Fe-4S] cluster: cysteine 120, cysteine 124, and cysteine 127. S-adenosyl-L-methionine-binding positions include 172–173 (GE), serine 204, 227–229 (SLH), and asparagine 305. The active-site S-methylcysteine intermediate is the cysteine 349.

Belongs to the radical SAM superfamily. RlmN family. The cofactor is [4Fe-4S] cluster.

It localises to the cytoplasm. The catalysed reaction is adenosine(2503) in 23S rRNA + 2 reduced [2Fe-2S]-[ferredoxin] + 2 S-adenosyl-L-methionine = 2-methyladenosine(2503) in 23S rRNA + 5'-deoxyadenosine + L-methionine + 2 oxidized [2Fe-2S]-[ferredoxin] + S-adenosyl-L-homocysteine. It catalyses the reaction adenosine(37) in tRNA + 2 reduced [2Fe-2S]-[ferredoxin] + 2 S-adenosyl-L-methionine = 2-methyladenosine(37) in tRNA + 5'-deoxyadenosine + L-methionine + 2 oxidized [2Fe-2S]-[ferredoxin] + S-adenosyl-L-homocysteine. Functionally, specifically methylates position 2 of adenine 2503 in 23S rRNA and position 2 of adenine 37 in tRNAs. This is Probable dual-specificity RNA methyltransferase RlmN from Streptococcus agalactiae serotype V (strain ATCC BAA-611 / 2603 V/R).